A 187-amino-acid chain; its full sequence is 1,6-anhydro-N-acetylmuramyl-L-alanine amidase AmpD (187 aa).

One can recognise an N-acetylmuramoyl-L-alanine amidase domain in the interval 29–167; sequence SLLVVHNISL…TPDRKTDPGP (139 aa). His34 lines the Zn(2+) pocket. Glu116 functions as the Proton acceptor in the catalytic mechanism. Zn(2+) contacts are provided by His154 and Asp164.

This sequence belongs to the N-acetylmuramoyl-L-alanine amidase 2 family. The cofactor is Zn(2+).

It is found in the cytoplasm. The catalysed reaction is Hydrolyzes the link between N-acetylmuramoyl residues and L-amino acid residues in certain cell-wall glycopeptides.. Functionally, involved in cell wall peptidoglycan recycling. Specifically cleaves the amide bond between the lactyl group of N-acetylmuramic acid and the alpha-amino group of the L-alanine in degradation products containing an anhydro N-acetylmuramyl moiety. The polypeptide is 1,6-anhydro-N-acetylmuramyl-L-alanine amidase AmpD (ampD) (Salmonella typhimurium (strain LT2 / SGSC1412 / ATCC 700720)).